The sequence spans 205 residues: Shieldin complex subunit 1 (205 aa).

Component of the shieldin complex, consisting of SHLD1, SHLD2, SHLD3 and MAD2L2/REV7. Within the complex, SHLD2 forms a scaffold which interacts with a SHLD3-MAD2L2 subcomplex via its N-terminus, and with SHLD1 via its C-terminus. Interacts with ASTE1.

The protein localises to the chromosome. In terms of biological role, component of the shieldin complex, which plays an important role in repair of DNA double-stranded breaks (DSBs). During G1 and S phase of the cell cycle, the complex functions downstream of TP53BP1 to promote non-homologous end joining (NHEJ) and suppress DNA end resection. Mediates various NHEJ-dependent processes including immunoglobulin class-switch recombination, and fusion of unprotected telomeres. This chain is Shieldin complex subunit 1, found in Homo sapiens (Human).